A 1411-amino-acid chain; its full sequence is DNA-directed RNA polymerase subunit beta' (1411 aa).

4 residues coordinate Zn(2+): Cys70, Cys72, Cys85, and Cys88. Mg(2+)-binding residues include Asp460, Asp462, and Asp464. Zn(2+) contacts are provided by Cys814, Cys888, Cys895, and Cys898.

This sequence belongs to the RNA polymerase beta' chain family. The RNAP catalytic core consists of 2 alpha, 1 beta, 1 beta' and 1 omega subunit. When a sigma factor is associated with the core the holoenzyme is formed, which can initiate transcription. Requires Mg(2+) as cofactor. The cofactor is Zn(2+).

It catalyses the reaction RNA(n) + a ribonucleoside 5'-triphosphate = RNA(n+1) + diphosphate. In terms of biological role, DNA-dependent RNA polymerase catalyzes the transcription of DNA into RNA using the four ribonucleoside triphosphates as substrates. In Idiomarina loihiensis (strain ATCC BAA-735 / DSM 15497 / L2-TR), this protein is DNA-directed RNA polymerase subunit beta'.